The primary structure comprises 541 residues: MPGLRRDRLLALLLLGALFSADLYFHLWPQVQRQLRPGERPAACPCSGRAPSASLHSAAASRDLGTASHNFSGALPRVEHPSRGHPAPRSKLQALFAHSLYQVLEDPPLLGPEDWLLASQEALRYYRRKVARWNRRHKIYKEQFNLTSLDPPLQFRPEASWVQFHLGINSHGLYSRSSLAISKLLHDMRHFPTISADYSQDEKALLGACDCSQIVKPSGVHLKLVLRFSDFGKAMFKPMRQQREEETPEDFFYFIDFQRHNAEIAAFHLDRILDFRRVPPTVGRLVNVTKEILEVTKNEILQSVFFVSPANNVCFFAKCPYMCKTEYAVCGNPHLLEGSLSAFLPSLNLAPRLSVPNPWIRSYSLSGKEEWELNPLYCDTVKQIYPYNSSNRLLGIIDMAVFDFLIGNMDRHHYEMFTKFGDDGYLIHLDNARGFGRHSQDEISILAPLAQCCMIKRKTLLHLQLLAQADYRLSDVMRESLLEDQLSPVLTEPHLLALDRRLQIILKTVEDCIEAHGERRVIAEGSAQRSAPDSGQANLTS.

The N-terminal stretch at 1 to 33 is a signal peptide; it reads MPGLRRDRLLALLLLGALFSADLYFHLWPQVQR. 3 N-linked (GlcNAc...) asparagine glycosylation sites follow: N70, N145, and N287. 4 disulfide bridges follow: C314–C330, C319–C323, C378–C452, and C453–C512. N-linked (GlcNAc...) asparagine glycosylation occurs at N388. N-linked (GlcNAc...) asparagine glycosylation is present at N538.

Belongs to the FAM20 family. In terms of assembly, interacts with FAM20C; probably forming a heterotetramer of 2 subunits of FAM20A and 2 subunits of FAM20C. In terms of processing, N-glycosylated. In the mammary gland, expressed at higher levels in lactating mice than in virgin mice. Observed throughout the tissues of the mandibular incisor, including the secretory and maturation stage ameloblasts, the suprabasal layers of the gingival epithelium and the odontoblasts. Weak expression in the enamel matrix.

The protein resides in the secreted. It is found in the golgi apparatus. Its subcellular location is the endoplasmic reticulum. Its function is as follows. Pseudokinase that acts as an allosteric activator of the Golgi serine/threonine protein kinase FAM20C and is involved in biomineralization of teeth. Forms a complex with FAM20C and increases the ability of FAM20C to phosphorylate the proteins that form the 'matrix' that guides the deposition of the enamel minerals. This is Pseudokinase FAM20A from Mus musculus (Mouse).